Reading from the N-terminus, the 290-residue chain is Ubiquinone biosynthesis protein COQ4, mitochondrial (290 aa).

Residues 1 to 32 (MAKRVCVGDLRKLAGSVSTPSRCILPPHARCF) constitute a mitochondrion transit peptide. Zn(2+)-binding residues include His168, Asp169, His172, and Glu184. Residues 260–290 (KPPDLREMRKAEREAQKKDKEAKETMTRAAV) form a disordered region.

This sequence belongs to the COQ4 family. In terms of assembly, component of a multi-subunit COQ enzyme complex, composed of at least COQ3, COQ4, COQ5, COQ6, COQ7 and COQ9. Zn(2+) serves as cofactor.

Its subcellular location is the mitochondrion inner membrane. It catalyses the reaction a 4-hydroxy-3-methoxy-5-(all-trans-polyprenyl)benzoate + H(+) = a 2-methoxy-6-(all-trans-polyprenyl)phenol + CO2. It participates in cofactor biosynthesis; ubiquinone biosynthesis. In terms of biological role, lyase that catalyzes the C1-decarboxylation of 4-hydroxy-3-methoxy-5-(all-trans-polyprenyl)benzoic acid into 2-methoxy-6-(all-trans-polyprenyl)phenol during ubiquinone biosynthesis. In Phaeosphaeria nodorum (strain SN15 / ATCC MYA-4574 / FGSC 10173) (Glume blotch fungus), this protein is Ubiquinone biosynthesis protein COQ4, mitochondrial.